A 562-amino-acid chain; its full sequence is Berberine bridge enzyme-like C-1 (562 aa).

The signal sequence occupies residues 1–19 (MFPLIILISFSFTFLSASA). 2 N-linked (GlcNAc...) asparagine glycosylation sites follow: Asn29 and Asn41. An intrachain disulfide couples Cys33 to Cys90. The region spanning 68–244 (NMPKPTVIIL…YAWKIRLVKV (177 aa)) is the FAD-binding PCMH-type domain. His105 is modified (pros-8alpha-FAD histidine). 3 N-linked (GlcNAc...) asparagine glycosylation sites follow: Asn359, Asn498, and Asn558.

Belongs to the oxygen-dependent FAD-linked oxidoreductase family. FAD is required as a cofactor. As to expression, mostly expressed in roots.

The protein localises to the vacuole. The protein operates within alkaloid biosynthesis; nicotine biosynthesis. In terms of biological role, involved in the biosynthesis of pyridine alkaloid natural products, leading mainly to the production of anabasine, anatabine, nicotine and nornicotine, effective deterrents against herbivores with antiparasitic and pesticide properties (neurotoxins); nornicotine serves as the precursor in the synthesis of the carcinogen compound N'-nitrosonornicotine (NNN). Catalyzes a late oxidation step subsequent to the pyridine ring condensation reaction in the biosynthesis of alkaloids. The polypeptide is Berberine bridge enzyme-like C-1 (Nicotiana tabacum (Common tobacco)).